The sequence spans 367 residues: Spermidine/putrescine import ATP-binding protein PotA (367 aa).

An ABC transporter domain is found at 10–240; that stretch reads IEFKNVSLDY…PINHFVANFI (231 aa). ATP is bound at residue 42-49; the sequence is GPSGSGKS.

The protein belongs to the ABC transporter superfamily. Spermidine/putrescine importer (TC 3.A.1.11.1) family. The complex is composed of two ATP-binding proteins (PotA), two transmembrane proteins (PotB and PotC) and a solute-binding protein (PotD).

It localises to the cell membrane. The catalysed reaction is ATP + H2O + polyamine-[polyamine-binding protein]Side 1 = ADP + phosphate + polyamineSide 2 + [polyamine-binding protein]Side 1.. Its function is as follows. Part of the ABC transporter complex PotABCD involved in spermidine/putrescine import. Responsible for energy coupling to the transport system. The polypeptide is Spermidine/putrescine import ATP-binding protein PotA (Oenococcus oeni (strain ATCC BAA-331 / PSU-1)).